A 220-amino-acid polypeptide reads, in one-letter code: Cytidylate kinase (220 aa).

10–18 (GPASSGKST) contacts ATP.

It belongs to the cytidylate kinase family. Type 1 subfamily.

It localises to the cytoplasm. The catalysed reaction is CMP + ATP = CDP + ADP. The enzyme catalyses dCMP + ATP = dCDP + ADP. In Lactococcus lactis subsp. cremoris (strain MG1363), this protein is Cytidylate kinase.